Here is a 426-residue protein sequence, read N- to C-terminus: Tetracenomycin polyketide synthase ketoacyl synthase alpha subunit (426 aa).

Residues Glu-6–Arg-420 enclose the Ketosynthase family 3 (KS3) domain. Catalysis depends on for beta-ketoacyl synthase activity residues Cys-173, His-313, and His-350.

Belongs to the thiolase-like superfamily. Beta-ketoacyl-ACP synthases family. As to quaternary structure, the tetracenomycin polyketide synthase (TCM PKS) is composed of a ketosynthase complex (TcmKL), an acyl carrier protein (TcmM), a cyclase (TcmN) and a probable second cyclase (TcmJ). TcmK and TcmL form a heterodimeric complex.

The enzyme catalyses 10 malonyl-CoA + 8 H(+) = tetracenomycin F2 + 10 CO2 + 10 CoA + 2 H2O. It functions in the pathway antibiotic biosynthesis; tetracenomycin C biosynthesis. In terms of biological role, involved in the biosynthesis of tetracenomycin C (TCM C). Part of a type II polyketide synthase (PKS) that catalyzes the synthesis of tetracenomycin F2 (TCM F2), a precursor of TCM C, from malonyl-CoA. TcmK and TcmL form a heterodimeric alpha-beta complex that catalyzes the condensation reactions between the growing acyl-enzyme chain and the malonyl-CoA extender units. In Streptomyces glaucescens, this protein is Tetracenomycin polyketide synthase ketoacyl synthase alpha subunit.